Reading from the N-terminus, the 152-residue chain is Protein SprT-like (152 aa).

The SprT-like domain occupies Leu9–Glu149. Position 70 (His70) interacts with Zn(2+). The active site involves Glu71. His74 serves as a coordination point for Zn(2+).

Belongs to the SprT family. Zn(2+) is required as a cofactor.

It is found in the cytoplasm. In Staphylococcus saprophyticus subsp. saprophyticus (strain ATCC 15305 / DSM 20229 / NCIMB 8711 / NCTC 7292 / S-41), this protein is Protein SprT-like.